The chain runs to 236 residues: Purine nucleoside phosphorylase DeoD-type (236 aa).

Residue H5 participates in a purine D-ribonucleoside binding. Residues G21, R25, R44, and 88-91 each bind phosphate; that span reads RIGS. A purine D-ribonucleoside contacts are provided by residues 180-182 and 204-205; these read EME and SD. The active-site Proton donor is the D205.

This sequence belongs to the PNP/UDP phosphorylase family. In terms of assembly, homohexamer; trimer of homodimers.

It carries out the reaction a purine D-ribonucleoside + phosphate = a purine nucleobase + alpha-D-ribose 1-phosphate. The enzyme catalyses a purine 2'-deoxy-D-ribonucleoside + phosphate = a purine nucleobase + 2-deoxy-alpha-D-ribose 1-phosphate. In terms of biological role, catalyzes the reversible phosphorolytic breakdown of the N-glycosidic bond in the beta-(deoxy)ribonucleoside molecules, with the formation of the corresponding free purine bases and pentose-1-phosphate. The polypeptide is Purine nucleoside phosphorylase DeoD-type (Chromobacterium violaceum (strain ATCC 12472 / DSM 30191 / JCM 1249 / CCUG 213 / NBRC 12614 / NCIMB 9131 / NCTC 9757 / MK)).